The chain runs to 422 residues: Interleukin-11 receptor subunit alpha (422 aa).

The N-terminal stretch at 1–22 (MSSSCSGLSRVLVAVATALVSA) is a signal peptide. Topologically, residues 24-370 (SPCPQAWGPP…DSVEQVAVLA (347 aa)) are extracellular. The Ig-like C2-type domain maps to 27 to 110 (PQAWGPPGVQ…LGGTVTLQLG (84 aa)). Intrachain disulfides connect Cys48-Cys94, Cys120-Cys130, and Cys170-Cys180. Fibronectin type-III domains lie at 112–219 (PPAR…LRPD) and 220–317 (PPQG…TPST). The N-linked (GlcNAc...) asparagine glycan is linked to Asn127. Asn194 is a glycosylation site (N-linked (GlcNAc...) asparagine). Positions 304-308 (WSTWS) match the WSXWS motif motif. Positions 335–355 (EVEPQVDSPAPPRPSLQPHPR) are disordered. Residues 371–391 (SLGILSFLGLVAGALALGLWL) form a helical membrane-spanning segment. The Cytoplasmic segment spans residues 392 to 422 (RLRRGGKDGSPKPGFLASVIPVDRRPGAPNL). Positions 398–422 (KDGSPKPGFLASVIPVDRRPGAPNL) are disordered. Over residues 413 to 422 (VDRRPGAPNL) the composition is skewed to basic and acidic residues.

This sequence belongs to the type I cytokine receptor family. Type 3 subfamily. As to quaternary structure, on IL11 binding, forms a multimer complex with IL6ST/gp130. In terms of processing, a short soluble form is also released from the membrane by proteolysis. The sIL11RA is formed either by limited proteolysis of membrane-bound receptors, a process referred to as ectodomain shedding, or directly secreted from the cells after alternative mRNA splicing. mIL11RA is cleaved by the proteases ADAM10, ELANE and PRTN3. In terms of tissue distribution, expressed in a number of cell lines, including the myelogenous leukemia cell line K-562, the megakaryocytic leukemia cell line M-07e, the erythroleukemia cell line TF-1, and the osteosarcoma cell lines, MG-63 and SaOS-2. Also expressed in normal and malignant prostate epithelial cell lines. Expression levels are increased in prostate carcinoma.

Its subcellular location is the membrane. The protein resides in the secreted. Receptor for interleukin-11 (IL11). The receptor systems for IL6, LIF, OSM, CNTF, IL11 and CT1 can utilize IL6ST for initiating signal transmission. The IL11/IL11RA/IL6ST complex may be involved in the control of proliferation and/or differentiation of skeletogenic progenitor or other mesenchymal cells. Essential for the normal development of craniofacial bones and teeth. Restricts suture fusion and tooth number. Functionally, soluble form of IL11 receptor (sIL11RA) that acts as an agonist of IL11 activity. The IL11:sIL11RA complex binds to IL6ST/gp130 on cell surfaces and induces signaling also on cells that do not express membrane-bound IL11RA in a process called IL11 trans-signaling. The protein is Interleukin-11 receptor subunit alpha of Homo sapiens (Human).